A 468-amino-acid polypeptide reads, in one-letter code: bZIP transcription factor 14 (468 aa).

Disordered stretches follow at residues 55-149 and 234-272; these read SRRK…EGRA and SPQSMSDGGGEEVASTSDVSGDEQQVPDDGIDYDLLGKD. Composition is skewed to low complexity over residues 64 to 82 and 95 to 106; these read SFVSGSDSSRSSTKSSSGS and VTAASTESVSSS. The segment covering 112–128 has biased composition (basic and acidic residues); sequence KKADTDDRVQRSRERNR. A bZIP 1 domain is found at 117–165; it reads DDRVQRSRERNRIHARKTRQRKKEQMQSLEGRATDLKHEQIRLKQIINE. Positions 119–139 are basic motif 1; sequence RVQRSRERNRIHARKTRQRKK. A compositionally biased stretch (basic residues) spans 129–138; the sequence is IHARKTRQRK. The tract at residues 145 to 159 is leucine-zipper 1; it reads LEGRATDLKHEQIRL. Residues 247–256 show a composition bias toward polar residues; the sequence is ASTSDVSGDE. In terms of domain architecture, bZIP 2 spans 279–333; it reads EELDQIRRERNRMHAKRTRDRKRIFTEEMAEMCRILEEENHLLRVHLGGLDSDFK. The basic motif 2 stretch occupies residues 285 to 312; it reads RRERNRMHAKRTRDRKRIFTEEMAEMCR. The segment at 313–320 is leucine-zipper 2; it reads ILEEENHL. The interval 400–468 is disordered; that stretch reads ERQQREAERK…TTSLAAPVGW (69 aa). A compositionally biased stretch (basic and acidic residues) spans 401–410; the sequence is RQQREAERKV. A compositionally biased stretch (low complexity) spans 417–426; that stretch reads SAASDTSTSD.

This sequence belongs to the bZIP family.

The protein localises to the nucleus. In terms of biological role, transcriptional activator which binds to the C-box-like motif 5'-TGACGT-3' and A-box-like motif 5'-GTACGTA-3' of target promoters to positively regulate the expression of genes involved in the tricarboxylic acid (TCA) cycle in response to nitrogen starvation. May also regulate the TCA cycle during day-to-night transitions. The protein is bZIP transcription factor 14 of Phaeodactylum tricornutum (strain CCAP 1055/1).